The sequence spans 144 residues: Large ribosomal subunit protein uL16 (144 aa).

The segment covering 1-19 (MLLPKRVKYRRQHRPKTTG) has biased composition (basic residues). Residues 1-23 (MLLPKRVKYRRQHRPKTTGRSKG) are disordered.

The protein belongs to the universal ribosomal protein uL16 family. Part of the 50S ribosomal subunit.

Binds 23S rRNA and is also seen to make contacts with the A and possibly P site tRNAs. This is Large ribosomal subunit protein uL16 from Staphylococcus saprophyticus subsp. saprophyticus (strain ATCC 15305 / DSM 20229 / NCIMB 8711 / NCTC 7292 / S-41).